The sequence spans 122 residues: Protein YqjC (122 aa).

Residues 1–20 (MKYRIALAVSLFALSAGSYA) form the signal peptide. A disordered region spans residues 65–100 (QLRADHQKKIAKQKDEVAERQQDLAEAKQKGDADKI). Basic and acidic residues predominate over residues 66–100 (LRADHQKKIAKQKDEVAERQQDLAEAKQKGDADKI).

The protein is Protein YqjC (yqjC) of Escherichia coli (strain K12).